A 453-amino-acid chain; its full sequence is Chromosomal replication initiator protein DnaA (453 aa).

Positions 1–74 are domain I, interacts with DnaA modulators; that stretch reads MKEKQFWNRI…GFEIYDAEIT (74 aa). The segment at 74 to 113 is domain II; the sequence is TPHYIFTKPQDTTSSQVEEATNLTLYDYSPKLVSIPYSDT. A domain III, AAA+ region region spans residues 114-331; sequence GLKEKYTFDN…GAINDITLIA (218 aa). Residues Gly-158, Gly-160, Lys-161, and Thr-162 each contribute to the ATP site. The tract at residues 332–453 is domain IV, binds dsDNA; the sequence is RVKKIKDITI…EIESIKKKIK (122 aa).

The protein belongs to the DnaA family. As to quaternary structure, oligomerizes as a right-handed, spiral filament on DNA at oriC.

The protein localises to the cytoplasm. Plays an essential role in the initiation and regulation of chromosomal replication. ATP-DnaA binds to the origin of replication (oriC) to initiate formation of the DNA replication initiation complex once per cell cycle. Binds the DnaA box (a 9 base pair repeat at the origin) and separates the double-stranded (ds)DNA. Forms a right-handed helical filament on oriC DNA; dsDNA binds to the exterior of the filament while single-stranded (ss)DNA is stabiized in the filament's interior. The ATP-DnaA-oriC complex binds and stabilizes one strand of the AT-rich DNA unwinding element (DUE), permitting loading of DNA polymerase. After initiation quickly degrades to an ADP-DnaA complex that is not apt for DNA replication. Binds acidic phospholipids. In Streptococcus pneumoniae (strain Taiwan19F-14), this protein is Chromosomal replication initiator protein DnaA.